The sequence spans 355 residues: Ion-translocating oxidoreductase complex subunit D (355 aa).

5 consecutive transmembrane segments (helical) span residues 13–33 (GKLTARIMLWVIFGMLPALAV), 35–55 (VYYFGFGVLIQICLAVALALI), 77–97 (VILTALILAMAIPPYAPYWVI), 98–118 (LIGTFCAVILGKHVYGGLGQN), and 128–148 (VVLLISFPVQMTGWMPPISLL). Threonine 186 is subject to FMN phosphoryl threonine. The next 5 membrane-spanning stretches (helical) occupy residues 216-236 (AGLGWLQVNLAFFIGGLFLIW), 245-265 (PVAILLSLGIFCGLFDLFGNA), 267-287 (AVGFFAQLFSGAMMFGAFFIA), 294-314 (PVTPKGKWVFGILIGLLICLI), and 318-338 (GNYPDGVAFAVLLANICVPLI).

Belongs to the NqrB/RnfD family. In terms of assembly, the complex is composed of six subunits: RnfA, RnfB, RnfC, RnfD, RnfE and RnfG. The cofactor is FMN.

It is found in the cell inner membrane. In terms of biological role, part of a membrane-bound complex that couples electron transfer with translocation of ions across the membrane. The sequence is that of Ion-translocating oxidoreductase complex subunit D from Actinobacillus succinogenes (strain ATCC 55618 / DSM 22257 / CCUG 43843 / 130Z).